Reading from the N-terminus, the 202-residue chain is Small ribosomal subunit protein uS4c-1 (202 aa).

One can recognise an S4 RNA-binding domain in the interval 90 to 152 (MRLDNIVLRA…NKSRQLIDLN (63 aa)).

The protein belongs to the universal ribosomal protein uS4 family. As to quaternary structure, part of the 30S ribosomal subunit. Contacts protein S5. The interaction surface between S4 and S5 is involved in control of translational fidelity.

Its subcellular location is the plastid. The protein resides in the chloroplast. Its function is as follows. One of the primary rRNA binding proteins, it binds directly to 16S rRNA where it nucleates assembly of the body of the 30S subunit. Functionally, with S5 and S12 plays an important role in translational accuracy. The chain is Small ribosomal subunit protein uS4c-1 from Cyanidium caldarium (Red alga).